Here is a 419-residue protein sequence, read N- to C-terminus: Serine hydroxymethyltransferase (419 aa).

(6S)-5,6,7,8-tetrahydrofolate is bound by residues L118 and 122 to 124; that span reads GHL. N6-(pyridoxal phosphate)lysine is present on K227.

The protein belongs to the SHMT family. Homodimer. It depends on pyridoxal 5'-phosphate as a cofactor.

The protein resides in the cytoplasm. It carries out the reaction (6R)-5,10-methylene-5,6,7,8-tetrahydrofolate + glycine + H2O = (6S)-5,6,7,8-tetrahydrofolate + L-serine. Its pathway is one-carbon metabolism; tetrahydrofolate interconversion. It functions in the pathway amino-acid biosynthesis; glycine biosynthesis; glycine from L-serine: step 1/1. Catalyzes the reversible interconversion of serine and glycine with tetrahydrofolate (THF) serving as the one-carbon carrier. This reaction serves as the major source of one-carbon groups required for the biosynthesis of purines, thymidylate, methionine, and other important biomolecules. Also exhibits THF-independent aldolase activity toward beta-hydroxyamino acids, producing glycine and aldehydes, via a retro-aldol mechanism. The polypeptide is Serine hydroxymethyltransferase (Chloroflexus aurantiacus (strain ATCC 29364 / DSM 637 / Y-400-fl)).